The following is a 353-amino-acid chain: Heterogeneous nuclear ribonucleoprotein D0 (353 aa).

Positions 1–89 (MSEEQFGGDG…SSPRHTEAAT (89 aa)) are disordered. S2 carries the post-translational modification N-acetylserine. A compositionally biased stretch (low complexity) spans 11 to 42 (AAAAATAAVGGSAGEQEGAMVAAAQGAAAAAG). Gly residues predominate over residues 43-56 (SGSGGGSAPGGTEG). Residues 62 to 71 (EGAKIDASKN) show a composition bias toward basic and acidic residues. S69 is subject to Phosphoserine. K70 participates in a covalent cross-link: Glycyl lysine isopeptide (Lys-Gly) (interchain with G-Cter in SUMO2). Phosphoserine occurs at positions 78, 80, and 81. At T89 the chain carries Phosphothreonine. 2 consecutive RRM domains span residues 95–177 (WKMF…KTKE) and 180–259 (KKIF…MSKE). K117 is modified (N6-methyllysine). T125 carries the post-translational modification Phosphothreonine. Residue K127 forms a Glycyl lysine isopeptide (Lys-Gly) (interchain with G-Cter in SUMO2) linkage. An N6-acetyllysine modification is found at K163. Position 188 is a phosphoserine (S188). Position 191 is a phosphothreonine (T191). K195 is covalently cross-linked (Glycyl lysine isopeptide (Lys-Gly) (interchain with G-Cter in SUMO2)). Residues K241 and K249 each carry the N6-acetyllysine modification. A Phosphoserine modification is found at S269. Omega-N-methylarginine occurs at positions 270, 276, 278, and 280. Residue R343 is modified to Asymmetric dimethylarginine; alternate. R343 bears the Dimethylated arginine; alternate mark. Omega-N-methylarginine; alternate is present on R343.

Identified in a IGF2BP1-dependent mRNP granule complex containing untranslated mRNAs. Part of a complex associated with the FOS mCRD domain and consisting of PABPC1, PAIP1, CSDE1/UNR and SYNCRIP. Interacts with IGF2BP2. Interacts with GTPBP1. Interacts with EIF4G1; the interaction requires RNA. Interacts with EIF3B and RPS3. Post-translationally, methylated by PRMT1, in an insulin-dependent manner. The PRMT1-mediated methylation regulates its phosphorylation. Arg-343 is dimethylated, probably to asymmetric dimethylarginine.

The protein resides in the nucleus. The protein localises to the cytoplasm. In terms of biological role, binds with high affinity to RNA molecules that contain AU-rich elements (AREs) found within the 3'-UTR of many proto-oncogenes and cytokine mRNAs. Also binds to double- and single-stranded DNA sequences in a specific manner and functions a transcription factor. Each of the RNA-binding domains specifically can bind solely to a single-stranded non-monotonous 5'-UUAG-3' sequence and also weaker to the single-stranded 5'-TTAGGG-3' telomeric DNA repeat. Binds RNA oligonucleotides with 5'-UUAGGG-3' repeats more tightly than the telomeric single-stranded DNA 5'-TTAGGG-3' repeats. Binding of RRM1 to DNA inhibits the formation of DNA quadruplex structure which may play a role in telomere elongation. May be involved in translationally coupled mRNA turnover. Implicated with other RNA-binding proteins in the cytoplasmic deadenylation/translational and decay interplay of the FOS mRNA mediated by the major coding-region determinant of instability (mCRD) domain. May play a role in the regulation of the rhythmic expression of circadian clock core genes. Directly binds to the 3'UTR of CRY1 mRNA and induces CRY1 rhythmic translation. May also be involved in the regulation of PER2 translation. This chain is Heterogeneous nuclear ribonucleoprotein D0 (Hnrnpd), found in Rattus norvegicus (Rat).